The primary structure comprises 50 residues: uncharacterized protein (50 aa).

This is an uncharacterized protein from Treponema pallidum (strain Nichols).